Consider the following 356-residue polypeptide: Pavine N-methyltransferase (356 aa).

Residues F96, S97, G135, N159, Q163, D185, V186, and V201 each coordinate S-adenosyl-L-homocysteine. S-adenosyl-L-methionine contacts are provided by F96, S97, G135, N159, Q163, D185, V186, and V201. E205 is a (S)-tetrahydropapaverine binding site. The active site involves C331.

This sequence belongs to the CFA/CMAS family. As to quaternary structure, homodimer.

The protein resides in the cytoplasm. The catalysed reaction is (+-)-pavine + S-adenosyl-L-methionine = N-methylpavine + S-adenosyl-L-homocysteine + H(+). It catalyses the reaction (S)-reticuline + S-adenosyl-L-methionine = (S)-tembetarine + S-adenosyl-L-homocysteine + H(+). The enzyme catalyses (S)-stylopine + S-adenosyl-L-methionine = (S)-cis-N-methylstylopine + S-adenosyl-L-homocysteine. It carries out the reaction (S)-scoulerine + S-adenosyl-L-methionine = (S)-cis-N-methylscoulerine + S-adenosyl-L-homocysteine. The catalysed reaction is (S)-tetrahydropapaverine + S-adenosyl-L-methionine = (S)-N-methyltetrahydropapaverine + S-adenosyl-L-homocysteine + H(+). It catalyses the reaction (S)-tetrahydropalmatine + S-adenosyl-L-methionine = (S)-cis-N-methyltetrahydropalmatine + S-adenosyl-L-homocysteine. It participates in alkaloid biosynthesis. In the presence of a racemic mixture of tetrahydropapaverine (THP), one molecule of (S)-THP binds in a productive mode, while one molecule of (R)-THP is bound next to it in a non-productive mode. The (R)-THP seems to inhibit the release of products from the enzyme when higher concentrations of the racemic substrate are added to the reaction. Functionally, N-methyltransferase with a substrate preference for (+-)-pavine and (S)-reticuline, but also active with the protoberberines scoulerine and stylopine and, to a lesser extent, tetrahydropapaverine (THP) and tetrahydropalmatine. Is not active on (R)-reticuline, cryptopine, glaucine, codeine, canadaline, noscapine and berbamine. This Thalictrum flavum subsp. glaucum (Yellow meadow rue) protein is Pavine N-methyltransferase.